Here is a 585-residue protein sequence, read N- to C-terminus: Zinc finger protein 496 (585 aa).

The disordered stretch occupies residues 1–41 (MPTALCPRVLAPKESEEPRKMRSPPGENPSPQGEPPSPESS). Residues 11-20 (APKESEEPRK) show a composition bias toward basic and acidic residues. Lysine 13 is covalently cross-linked (Glycyl lysine isopeptide (Lys-Gly) (interchain with G-Cter in SUMO2)). A compositionally biased stretch (pro residues) spans 26 to 38 (GENPSPQGEPPSP). The 83-residue stretch at 42-124 (RRLFRRFRYQ…AAVEALEREP (83 aa)) folds into the SCAN box domain. The disordered stretch occupies residues 141 to 167 (DDGDGPAAPQDLEQERMSAESQSYPDA). Serine 182 carries the phosphoserine modification. The KRAB domain maps to 220-294 (SPFKDMILCF…DLQDKEIPQA (75 aa)). A disordered region spans residues 358–397 (SSSGDEDSQHSPYCTEELRSPPEDLHSVPAHQSNASAEGE). Basic and acidic residues predominate over residues 373 to 383 (EELRSPPEDLH). A compositionally biased stretch (polar residues) spans 387-397 (AHQSNASAEGE). The segment at 405–427 (YVCPNCGKIFRWRVNFIRHLRSR) adopts a C2H2-type 1; degenerate zinc-finger fold. 2 consecutive C2H2-type zinc fingers follow at residues 433 to 455 (HKCS…LETH) and 461 to 483 (YRCT…RRIH). A disordered region spans residues 483–506 (HLQPASQQPMKKSEEEALETEGTG). Lysine 494 participates in a covalent cross-link: Glycyl lysine isopeptide (Lys-Gly) (interchain with G-Cter in SUMO2). C2H2-type zinc fingers lie at residues 520–543 (FQCG…RHCH) and 551–573 (FQCR…ERLH). The short motif at 575 to 579 (KRRSK) is the Nuclear localization signal element.

It belongs to the krueppel C2H2-type zinc-finger protein family. In terms of assembly, interacts (via zinc-fingers) with JARID2. Interacts with NSD1.

The protein resides in the nucleus. In terms of biological role, DNA-binding transcription factor that can both act as an activator and a repressor. This Mus musculus (Mouse) protein is Zinc finger protein 496 (Znf496).